Here is a 235-residue protein sequence, read N- to C-terminus: 7-cyano-7-deazaguanine synthase (235 aa).

7–17 (CSGGLDSVSLA) contacts ATP. Residues C185, C193, C196, and C199 each contribute to the Zn(2+) site.

Belongs to the QueC family. Zn(2+) serves as cofactor.

The enzyme catalyses 7-carboxy-7-deazaguanine + NH4(+) + ATP = 7-cyano-7-deazaguanine + ADP + phosphate + H2O + H(+). Its pathway is purine metabolism; 7-cyano-7-deazaguanine biosynthesis. Catalyzes the ATP-dependent conversion of 7-carboxy-7-deazaguanine (CDG) to 7-cyano-7-deazaguanine (preQ(0)). The polypeptide is 7-cyano-7-deazaguanine synthase (Allorhizobium ampelinum (strain ATCC BAA-846 / DSM 112012 / S4) (Agrobacterium vitis (strain S4))).